The chain runs to 509 residues: MAAIGVHLGCTSACVAVYKDGRAGVVANDAGDRVTPAVVAYSENEEIVGLAAKQSRIRNISNTVMKVKQILGRSSNDPQAQKYITESKCLVIEKNGKLRYEIDTGEETRFVNPEDVVRLIFSKMKETAHSVLGSDANDVVITVPFDFGEKQKNALGEAARAAGFNVLRLIHEPSAALLAYGIGQDSPNGKSNILVFKLGGTSLSLSVMEVNSGIYRVLSTNTDDNIGGAHFTETLAQYLASEFQRSFKHDVKGNARAMMKLMNSAEVAKHSLSTLGSANCFLDSLYEGQDFDCNVSRARFELLCSPLFNKCIEAIRGLLDQSGFTADDINKVVLCGGSSRIPKLQQLIKDLFPAVELLNSIPPDEVIPIGAAIEAGILIGKENLLVEDSLMIECSARDILVKGVDESGASRFTVLFPSGTPLPARRQHTLQAPGSISSVCLELYESDGKNSAKEETKFAQVVLQDLDKKENGLRDILAVLTMKRDGSLHVTCTDQETGKCEAISIEVAS.

This sequence belongs to the heat shock protein 70 family. Component of ribosome-associated complex (RAC), a heterodimer composed of Hsp70/DnaK-type chaperone HSPA14 and Hsp40/DnaJ-type chaperone DNAJC2.

It localises to the cytoplasm. The protein localises to the cytosol. Component of the ribosome-associated complex (RAC), a complex involved in folding or maintaining nascent polypeptides in a folding-competent state. In the RAC complex, binds to the nascent polypeptide chain, while DNAJC2 stimulates its ATPase activity. In Macaca fascicularis (Crab-eating macaque), this protein is Heat shock 70 kDa protein 14 (HSPA14).